The following is a 475-amino-acid chain: tRNA-2-methylthio-N(6)-dimethylallyladenosine synthase (475 aa).

A disordered region spans residues 1-21 (MTTAPTSPALPASSDTAPTGP). In terms of domain architecture, MTTase N-terminal spans 24 to 145 (RGLHVITWGC…LPEMVARAAR (122 aa)). [4Fe-4S] cluster contacts are provided by Cys33, Cys69, Cys108, Cys186, Cys190, and Cys193. Residues 172-404 (TQGNLTAFLT…QALLREQQDA (233 aa)) form the Radical SAM core domain. Residues 407 to 469 (ADMVGTVQEI…TNSLGGTLIR (63 aa)) enclose the TRAM domain.

It belongs to the methylthiotransferase family. MiaB subfamily. As to quaternary structure, monomer. [4Fe-4S] cluster serves as cofactor.

It localises to the cytoplasm. It catalyses the reaction N(6)-dimethylallyladenosine(37) in tRNA + (sulfur carrier)-SH + AH2 + 2 S-adenosyl-L-methionine = 2-methylsulfanyl-N(6)-dimethylallyladenosine(37) in tRNA + (sulfur carrier)-H + 5'-deoxyadenosine + L-methionine + A + S-adenosyl-L-homocysteine + 2 H(+). Functionally, catalyzes the methylthiolation of N6-(dimethylallyl)adenosine (i(6)A), leading to the formation of 2-methylthio-N6-(dimethylallyl)adenosine (ms(2)i(6)A) at position 37 in tRNAs that read codons beginning with uridine. The sequence is that of tRNA-2-methylthio-N(6)-dimethylallyladenosine synthase from Gluconobacter oxydans (strain 621H) (Gluconobacter suboxydans).